Consider the following 167-residue polypeptide: MVPPEEIASASNPDIEGENILHFLCREGDITDLMAFKNVISDANRHLVLQFNRHGKQCVHIVSNPGIADPQEKLKLLMEWGADINGQERVFGNTPLHIAAYTQNHKLATWLCNQPGINMGISNYLFKTPYYVACERHDIKIMNILRAKGGQCRIYRCNEAWLFTRNY.

3 ANK repeats span residues 54-86, 91-121, and 125-154; these read HGKQ…DING, FGNT…NMGI, and LFKT…QCRI.

This sequence belongs to the polydnaviridae I-Kappa-B-like protein family.

In terms of biological role, suppresses the host immune response through NF-kappa-B inactivation. Possesses ankyrin repeat domains required for NF-kappa-B binding but lacks the regulatory regions required for dissociation from NF-kappa-B and degradation. Therefore, prevents host NF-kappa-B release and subsequent activation. This Microplitis demolitor (Parasitoid wasp) protein is I-Kappa-B like protein I1 (I1).